Here is a 599-residue protein sequence, read N- to C-terminus: MLRLLKRNIQISKRIVFTILKQKAFKGNHPCVPSVCTITYSRFHCLPDTLKSLLPMSSKTTLSMLPQVNIGANSFSAETPVDLKKENETELANISGPHKKSTSTSTRKRARSSKKKATDSVSDKIDESVASYDSSTHLRRSSRSKKPVNYNSSSESESEEQISKATKKVKQKEEEEYVEEVDEKSLKNESSSDEFEPVVPEQLETPISKRRRSRSSAKNLEKESTMNLDDHAPREMFDCLDKPIPWRGRLGYACLNTILRSMKERVFCSRTCRITTIQRDGLESVKQLGTQNVLDLIKLVEWNHNFGIHFMRVSSDLFPFASHAKYGYTLEFAQSHLEEVGKLANKYNHRLTMHPGQYTQIASPREVVVDSAIRDLAYHDEILSRMKLNEQLNKDAVLIIHLGGTFEGKKETLDRFRKNYQRLSDSVKARLVLENDDVSWSVQDLLPLCQELNIPLVLDWHHHNIVPGTLREGSLDLMPLIPTIRETWTRKGITQKQHYSESADPTAISGMKRRAHSDRVFDFPPCDPTMDLMIEAKEKEQAVFELCRRYELQNPPCPLEIMGPEYDQTRDGYYPPGAEKRLTARKRRSRKEEVEEDEK.

2 disordered regions span residues 89–224 and 561–599; these read TELA…EKES and IMGP…EDEK. Basic residues predominate over residues 97–115; sequence PHKKSTSTSTRKRARSSKK. A compositionally biased stretch (basic and acidic residues) spans 116–127; that stretch reads KATDSVSDKIDE. Basic residues predominate over residues 137–146; it reads HLRRSSRSKK.

This sequence belongs to the uve1/UvsE family.

Functionally, endonuclease for the repair of UV-irradiated DNA. Involved in the excision of cyclobutane pyrimidine dimers (CPD) and 6-4 pyrimidine pyrimidones (6-4PP) which forms the UV damage repair (UVDR) pathway. Also functions in oxidative damage repair in vivo. Provides back-up AP endonuclease activity to apn2 together with apn1. In Schizosaccharomyces pombe (strain 972 / ATCC 24843) (Fission yeast), this protein is UV-damage endonuclease (uve1).